The sequence spans 501 residues: TGF-beta receptor type-1 (501 aa).

Positions 1–29 (MEAASAALRRCLLLIVLVAAATLLPGAKA) are cleaved as a signal peptide. The Extracellular portion of the chain corresponds to 30-124 (LQCFCHLCTK…QSAGLGPVEL (95 aa)). 5 cysteine pairs are disulfide-bonded: Cys-32/Cys-50, Cys-34/Cys-37, Cys-44/Cys-67, Cys-82/Cys-94, and Cys-95/Cys-100. Asn-41 carries an N-linked (GlcNAc...) asparagine glycan. A helical membrane pass occupies residues 125–145 (AAVIAGPVCFVCIALMLMVYI). The Cytoplasmic portion of the chain corresponds to 146 to 501 (CHNRTVIHHR…QLSQQEGIKM (356 aa)). Phosphoserine is present on Ser-163. A GS domain is found at 173–202 (TTLKDLIYDMTTSGSGSGLPLLVQRTIART). 2 positions are modified to phosphothreonine; by TGFBR2: Thr-183 and Thr-184. Phosphoserine; by TGFBR2 occurs at positions 185, 187, and 189. Positions 191 to 192 (LP) match the FKBP1A-binding motif. Residues 203 to 493 (IVLQESIGKG…LRIKKTLSQL (291 aa)) form the Protein kinase domain. ATP-binding positions include 209-217 (IGKGRFGEV) and Lys-230. The active-site Proton acceptor is Asp-331. Lys-389 participates in a covalent cross-link: Glycyl lysine isopeptide (Lys-Gly) (interchain with G-Cter in SUMO).

The protein belongs to the protein kinase superfamily. TKL Ser/Thr protein kinase family. TGFB receptor subfamily. Homodimer; in the endoplasmic reticulum but also at the cell membrane. Heterohexamer; TGFB1, TGFB2 and TGFB3 homodimeric ligands assemble a functional receptor composed of two TGFBR1 and TGFBR2 heterodimers to form a ligand-receptor heterohexamer. The respective affinity of TGBRB1 and TGFBR2 for the ligands may modulate the kinetics of assembly of the receptor and may explain the different biological activities of TGFB1, TGFB2 and TGFB3. Component of a complex composed of TSC22D1 (via N-terminus), TGFBR1 and TGFBR2; the interaction between TSC22D1 and TGFBR1 is inhibited by SMAD7 and promoted by TGFB1. Interacts with CD109; inhibits TGF-beta receptor activation in keratinocytes. Interacts with RBPMS. Interacts with SMAD2, SMAD3 and ZFYVE9; ZFYVE9 recruits SMAD2 and SMAD3 to the TGF-beta receptor. Interacts with TRAF6 and MAP3K7; induces MAP3K7 activation by TRAF6. Interacts with PARD6A; involved in TGF-beta induced epithelial to mesenchymal transition. Interacts with NEDD4L. Interacts with SMAD7, SMURF1 and SMURF2; SMAD7 recruits NEDD4L, SMURF1 and SMURF2 to the TGF-beta receptor. Interacts with USP15 and VPS39. Interacts (unphosphorylated) with FKBP1A; prevents TGFBR1 phosphorylation by TGFBR2 and stabilizes it in the inactive conformation. Interacts with SDCBP (via C-terminus). Interacts with CAV1 and this interaction is impaired in the presence of SDCBP. Interacts with APPL1; interaction is TGF beta dependent; mediates trafficking of the TGFBR1 from the endosomes to the nucleus via microtubules in a TRAF6-dependent manner. Interacts with GPR50; this interaction promotes the constitutive activation of SMAD signaling pathway. Mg(2+) serves as cofactor. Requires Mn(2+) as cofactor. In terms of processing, phosphorylated at basal levels in the absence of ligand. Activated upon phosphorylation by TGFBR2, mainly in the GS domain. Phosphorylation in the GS domain abrogates FKBP1A-binding. N-Glycosylated. Post-translationally, ubiquitinated; undergoes ubiquitination catalyzed by several E3 ubiquitin ligases including SMURF1, SMURF2 and NEDD4L2. Results in the proteasomal and/or lysosomal degradation of the receptor thereby negatively regulating its activity. Deubiquitinated by USP15, leading to stabilization of the protein and enhanced TGF-beta signal. Its ubiquitination and proteasome-mediated degradation is negatively regulated by SDCBP. In terms of tissue distribution, urogenital ridge, testis, ovary, brain and lungs.

The protein resides in the cell membrane. The protein localises to the cell junction. Its subcellular location is the tight junction. It is found in the membrane raft. It localises to the cell surface. The catalysed reaction is L-threonyl-[receptor-protein] + ATP = O-phospho-L-threonyl-[receptor-protein] + ADP + H(+). It catalyses the reaction L-seryl-[receptor-protein] + ATP = O-phospho-L-seryl-[receptor-protein] + ADP + H(+). Its activity is regulated as follows. Kept in an inactive conformation by FKBP1A preventing receptor activation in absence of ligand. CD109 is another inhibitor of the receptor. In terms of biological role, transmembrane serine/threonine kinase forming with the TGF-beta type II serine/threonine kinase receptor, TGFBR2, the non-promiscuous receptor for the TGF-beta cytokines TGFB1, TGFB2 and TGFB3. Transduces the TGFB1, TGFB2 and TGFB3 signal from the cell surface to the cytoplasm and is thus regulating a plethora of physiological and pathological processes including cell cycle arrest in epithelial and hematopoietic cells, control of mesenchymal cell proliferation and differentiation, wound healing, extracellular matrix production, immunosuppression and carcinogenesis. The formation of the receptor complex composed of 2 TGFBR1 and 2 TGFBR2 molecules symmetrically bound to the cytokine dimer results in the phosphorylation and the activation of TGFBR1 by the constitutively active TGFBR2. Activated TGFBR1 phosphorylates SMAD2 which dissociates from the receptor and interacts with SMAD4. The SMAD2-SMAD4 complex is subsequently translocated to the nucleus where it modulates the transcription of the TGF-beta-regulated genes. This constitutes the canonical SMAD-dependent TGF-beta signaling cascade. Also involved in non-canonical, SMAD-independent TGF-beta signaling pathways. For instance, TGFBR1 induces TRAF6 autoubiquitination which in turn results in MAP3K7 ubiquitination and activation to trigger apoptosis. Also regulates epithelial to mesenchymal transition through a SMAD-independent signaling pathway through PARD6A phosphorylation and activation. This chain is TGF-beta receptor type-1 (Tgfbr1), found in Rattus norvegicus (Rat).